Here is a 585-residue protein sequence, read N- to C-terminus: Glutamate decarboxylase (585 aa).

Over residues 35 to 56 the composition is skewed to polar residues; the sequence is KSAVQSGHQGSNNMRDTSSQGM. Residues 35-60 are disordered; the sequence is KSAVQSGHQGSNNMRDTSSQGMANKY. Residue lysine 318 is modified to N6-(pyridoxal phosphate)lysine.

Belongs to the group II decarboxylase family. Pyridoxal 5'-phosphate is required as a cofactor.

The catalysed reaction is L-glutamate + H(+) = 4-aminobutanoate + CO2. This Saccharomyces cerevisiae (strain ATCC 204508 / S288c) (Baker's yeast) protein is Glutamate decarboxylase (GAD1).